The primary structure comprises 427 residues: Trigger factor (427 aa).

A PPIase FKBP-type domain is found at 163–248; sequence GDTVVIDFVG…IHEVKTKEVP (86 aa).

It belongs to the FKBP-type PPIase family. Tig subfamily.

Its subcellular location is the cytoplasm. It carries out the reaction [protein]-peptidylproline (omega=180) = [protein]-peptidylproline (omega=0). In terms of biological role, involved in protein export. Acts as a chaperone by maintaining the newly synthesized protein in an open conformation. Functions as a peptidyl-prolyl cis-trans isomerase. The sequence is that of Trigger factor from Streptococcus agalactiae serotype Ia (strain ATCC 27591 / A909 / CDC SS700).